The chain runs to 441 residues: MAVGAEPKAAVRETVKRNIMTLQPVDVTWRFAGLQEYFRKLMPFFLKNLRHDKIFLSAGSLAFQTLLSIVPFLAVTLSVLRIFSFFASLNRYLEEFIFQNFIPSAGEDLRIHFEAFIGKTSTVPLIGGLLLFIIALSLISTIDRTLNDIWKVRAPRKPIQAFTLYWTVLTLGPVLIGSSLGASSYVWYTVFTEGPLLELKIRLISFLPFVNSLLSFLLLYMLVPNRRVKLPHAFSGAVAAALLFELSKKWFVFYVSRFATFEHIYGAISAVPLLFFWIYIGWLVVLTGAELVFSIGNVLSSSVEPVPKRLLPGLTQLFSVLGTIWRAQQDGSPVHIGTRVVRGALSATAADRIVDLLLQKGVVHETSGGELVVSADLYQMTLFDLYGLIPWELAVHEDLEGYDDDGSETFASLEKDVTVCLKETMAVPVALLLQDSTNQCI.

6 helical membrane-spanning segments follow: residues 54–74 (IFLS…PFLA), 122–142 (TVPL…ISTI), 161–181 (AFTL…SSLG), 203–223 (LISF…YMLV), 233–253 (AFSG…WFVF), and 266–286 (GAIS…LVVL).

The protein belongs to the UPF0761 family.

Its subcellular location is the cell inner membrane. The polypeptide is UPF0761 membrane protein Clim_1521 (Chlorobium limicola (strain DSM 245 / NBRC 103803 / 6330)).